The primary structure comprises 354 residues: Inositol-tetrakisphosphate 1-kinase 1 (354 aa).

Basic and acidic residues predominate over residues 1–16 (MRVHEEASEDKEREVE). The disordered stretch occupies residues 1 to 24 (MRVHEEASEDKEREVEEAPDLMPL). 1D-myo-inositol 1,3,4-trisphosphate contacts are provided by Lys-53 and Lys-95. Residues Arg-130 and Lys-180 each contribute to the ATP site. The ATP-grasp domain occupies 140–347 (LNLSNAYGEV…FLLSLVQNKY (208 aa)). 1D-myo-inositol 1,3,4-trisphosphate contacts are provided by His-191 and Lys-223. Residues 212–223 (QEFVNHGGILFK) and Ser-238 each bind ATP. Asp-303, Asp-318, and Asn-320 together coordinate Mg(2+). Asn-320 serves as a coordination point for 1D-myo-inositol 1,3,4-trisphosphate.

Belongs to the ITPK1 family. Monomer. Mg(2+) is required as a cofactor.

It catalyses the reaction 1D-myo-inositol 3,4,5,6-tetrakisphosphate + ATP = 1D-myo-inositol 1,3,4,5,6-pentakisphosphate + ADP + H(+). The catalysed reaction is 1D-myo-inositol 1,3,4-trisphosphate + ATP = 1D-myo-inositol 1,3,4,5-tetrakisphosphate + ADP + H(+). It carries out the reaction 1D-myo-inositol 1,3,4-trisphosphate + ATP = 1D-myo-inositol 1,3,4,6-tetrakisphosphate + ADP + H(+). Functionally, kinase that can phosphorylate various inositol polyphosphate such as Ins(3,4,5,6)P4 or Ins(1,3,4)P3 and participates in phytic acid biosynthesis in developing seeds. Phytic acid is the primary storage form of phosphorus in cereal grains and other plant seeds. The sequence is that of Inositol-tetrakisphosphate 1-kinase 1 (ITPK1) from Oryza sativa subsp. indica (Rice).